A 311-amino-acid polypeptide reads, in one-letter code: tRNA-cytidine(32) 2-sulfurtransferase (311 aa).

Residues 47–52 (SGGKDS) carry the PP-loop motif motif. Residues Cys-122, Cys-125, and Cys-213 each contribute to the [4Fe-4S] cluster site.

Belongs to the TtcA family. In terms of assembly, homodimer. It depends on Mg(2+) as a cofactor. The cofactor is [4Fe-4S] cluster.

It is found in the cytoplasm. The catalysed reaction is cytidine(32) in tRNA + S-sulfanyl-L-cysteinyl-[cysteine desulfurase] + AH2 + ATP = 2-thiocytidine(32) in tRNA + L-cysteinyl-[cysteine desulfurase] + A + AMP + diphosphate + H(+). It functions in the pathway tRNA modification. Functionally, catalyzes the ATP-dependent 2-thiolation of cytidine in position 32 of tRNA, to form 2-thiocytidine (s(2)C32). The sulfur atoms are provided by the cysteine/cysteine desulfurase (IscS) system. The polypeptide is tRNA-cytidine(32) 2-sulfurtransferase (Klebsiella pneumoniae subsp. pneumoniae (strain ATCC 700721 / MGH 78578)).